A 199-amino-acid chain; its full sequence is Protein-methionine-sulfoxide reductase heme-binding subunit MsrQ (199 aa).

The next 5 helical transmembrane spans lie at 8–28 (ITWLKVILHLAGLLPFIWLFW), 82–102 (LWCFAWATLHLTSYALLELGI), 116–136 (PYLTLGIVSWVILFALTLTST), 149–169 (FLHNFVYLVAILTPIHYLWSV), and 171–191 (ILSPQPVIYALLALGLLAWRY).

This sequence belongs to the MsrQ family. Heterodimer of a catalytic subunit (MsrP) and a heme-binding subunit (MsrQ). FMN serves as cofactor. The cofactor is heme b.

Its subcellular location is the cell inner membrane. Its function is as follows. Part of the MsrPQ system that repairs oxidized periplasmic proteins containing methionine sulfoxide residues (Met-O), using respiratory chain electrons. Thus protects these proteins from oxidative-stress damage caused by reactive species of oxygen and chlorine generated by the host defense mechanisms. MsrPQ is essential for the maintenance of envelope integrity under bleach stress, rescuing a wide series of structurally unrelated periplasmic proteins from methionine oxidation. MsrQ provides electrons for reduction to the reductase catalytic subunit MsrP, using the quinone pool of the respiratory chain. The sequence is that of Protein-methionine-sulfoxide reductase heme-binding subunit MsrQ from Enterobacter sp. (strain 638).